We begin with the raw amino-acid sequence, 419 residues long: Endochitinase 2 (419 aa).

The N-terminal stretch at 1-18 (MHHLRALVGVGLAGLAAG) is a signal peptide. Positions 35–343 (AQNVVYWGQN…QQAKSILVNG (309 aa)) constitute a GH18 domain. Asn153 carries an N-linked (GlcNAc...) asparagine glycan. Catalysis depends on Glu173, which acts as the Proton donor. Residues Asn237 and Asn256 are each glycosylated (N-linked (GlcNAc...) asparagine). Residues 343 to 390 (GAPCPSSGPPSSTPATAPAPTATTMPSSTSVSSPTASPTGGTVPQWGQ) are disordered. The segment covering 355 to 384 (TPATAPAPTATTMPSSTSVSSPTASPTGGT) has biased composition (low complexity). The CBM1 domain occupies 383-419 (GTVPQWGQCGGEGYSGPTQCVPPYQCVKQGDWWSSCR).

It belongs to the glycosyl hydrolase 18 family. Chitinase class III subfamily.

It localises to the secreted. The catalysed reaction is Random endo-hydrolysis of N-acetyl-beta-D-glucosaminide (1-&gt;4)-beta-linkages in chitin and chitodextrins.. In terms of biological role, secreted chitinase involved in the degradation of chitin, a component of the cell walls of fungi and exoskeletal elements of some animals (including worms and arthropods). Participates in the infection process and directly acts in the penetration process of the host cuticle. The polypeptide is Endochitinase 2 (chi2) (Metarhizium anisopliae (Entomophthora anisopliae)).